Here is a 581-residue protein sequence, read N- to C-terminus: Sulfate adenylyltransferase (581 aa).

Residues 1-176 are N-terminal; the sequence is MANAPHGGVL…VQAIQAPTHF (176 aa). Residues 177-401 are catalytic; it reads DYVPLRFTPA…LRESYPPRPQ (225 aa). Q204 provides a ligand contact to sulfate. Residues 204 to 207 and 298 to 301 each bind ATP; these read QTRN and GRDH. Catalysis depends on residues T205, R206, and N207. R206 serves as a coordination point for sulfate. A sulfate-binding site is contributed by A302. M340 contributes to the ATP binding site. An allosteric regulation domain; adenylyl-sulfate kinase-like region spans residues 402–581; that stretch reads QGFTILLTGL…IMILESQNLV (180 aa). Residues 441-444, 486-487, and R526 contribute to the 3'-phosphoadenylyl sulfate site; these read EELR and TA.

The protein in the N-terminal section; belongs to the sulfate adenylyltransferase family. In the C-terminal section; belongs to the APS kinase family. Homohexamer. Dimer of trimers.

The protein resides in the cytoplasm. The catalysed reaction is sulfate + ATP + H(+) = adenosine 5'-phosphosulfate + diphosphate. The protein operates within sulfur metabolism; hydrogen sulfide biosynthesis; sulfite from sulfate: step 1/3. With respect to regulation, allosterically inhibited by 3'-phosphoadenosine 5'-phosphosulfate (PAPS). Functionally, catalyzes the first intracellular reaction of sulfate assimilation, forming adenosine-5'-phosphosulfate (APS) from inorganic sulfate and ATP. Plays an important role in sulfate activation as a component of the biosynthesis pathway of sulfur-containing amino acids. The chain is Sulfate adenylyltransferase from Cryptococcus neoformans var. neoformans serotype D (strain B-3501A) (Filobasidiella neoformans).